Here is a 551-residue protein sequence, read N- to C-terminus: Cation/acetate symporter ActP (551 aa).

Transmembrane regions (helical) follow at residues 34 to 54, 77 to 97, 104 to 124, 150 to 170, 184 to 204, 207 to 227, 263 to 283, 304 to 324, 356 to 376, 406 to 426, 430 to 450, 469 to 489, and 498 to 518; these read IEAIVMFVLFVGATLYITYWA, GLAIAGDFMSAASFLGISALV, GLIYSIGFLIGWPIILFLIAE, LSACGSLVVVALYLIAQMVGA, VAVVLVGILMVMYVLFGGMLA, WVQIIKAVLLLAGASFMALMV, ISALSLGLALMFGTAGLPHIL, GFIGYFYILTFIIGFGAILLV, FFLGFISAVAFATILAVVAGL, VSKITVVVLGFVAIGLGILFE, IAFMVGLAFSIAASCNFPIIF, LGLLTAVILMILGPTIWVTIL, and YEYPALFSMIVAFVGIWFFSI.

This sequence belongs to the sodium:solute symporter (SSF) (TC 2.A.21) family.

Its subcellular location is the cell inner membrane. Functionally, transports acetate. This Yersinia enterocolitica serotype O:8 / biotype 1B (strain NCTC 13174 / 8081) protein is Cation/acetate symporter ActP.